A 227-amino-acid polypeptide reads, in one-letter code: Probable 2-phosphosulfolactate phosphatase (227 aa).

It belongs to the ComB family. The cofactor is Mg(2+).

It carries out the reaction (2R)-O-phospho-3-sulfolactate + H2O = (2R)-3-sulfolactate + phosphate. This chain is Probable 2-phosphosulfolactate phosphatase, found in Thermotoga petrophila (strain ATCC BAA-488 / DSM 13995 / JCM 10881 / RKU-1).